A 207-amino-acid polypeptide reads, in one-letter code: MTKTLYYRKLGRTSAHRQALLRNLVTSLVKHESIQTTWAKAKEAQRFAEKLITMAKRANPQNNRKGLAEGMVFEKETTLKKVFDVLVPRYNGRRCGYTRLLKLPPRSTDNAPMGVLEFVDGPKDIRFHMTAKTVGICLAQQKALTPITRKNIHKVLLFRKNGKAEFDQLVQKEKESEHARLKEDHEDEKTVKKDWKRGDPIPRPTYI.

The span at 173-200 (EKESEHARLKEDHEDEKTVKKDWKRGDP) shows a compositional bias: basic and acidic residues. The disordered stretch occupies residues 173 to 207 (EKESEHARLKEDHEDEKTVKKDWKRGDPIPRPTYI).

It belongs to the bacterial ribosomal protein bL17 family. As to quaternary structure, component of the mitochondrial large ribosomal subunit (mt-LSU). Mature yeast 74S mitochondrial ribosomes consist of a small (37S) and a large (54S) subunit. The 37S small subunit contains a 15S ribosomal RNA (15S mt-rRNA) and at least 32 different proteins. The 54S large subunit contains a 21S rRNA (21S mt-rRNA) and at least 45 different proteins.

Its subcellular location is the mitochondrion. In terms of biological role, component of the mitochondrial ribosome (mitoribosome), a dedicated translation machinery responsible for the synthesis of mitochondrial genome-encoded proteins, including at least some of the essential transmembrane subunits of the mitochondrial respiratory chain. The mitoribosomes are attached to the mitochondrial inner membrane and translation products are cotranslationally integrated into the membrane. The sequence is that of Large ribosomal subunit protein bL17m (mrpl8) from Schizosaccharomyces pombe (strain 972 / ATCC 24843) (Fission yeast).